The sequence spans 456 residues: Protein trichome birefringence-like 25 (456 aa).

A helical; Signal-anchor for type II membrane protein transmembrane segment spans residues glutamine 26–tyrosine 42. The short motif at glycine 172 to serine 174 is the GDS motif element. The short motif at aspartate 426–asparagine 440 is the DCXHWCLPGXXDXWN motif element.

Belongs to the PC-esterase family. TBL subfamily.

The protein localises to the membrane. May be involved in the O-acetylation of mannan. May act as a bridging protein that binds pectin and other cell wall polysaccharides. Probably involved in maintaining esterification of pectins. In Arabidopsis thaliana (Mouse-ear cress), this protein is Protein trichome birefringence-like 25 (TBL25).